Here is a 31-residue protein sequence, read N- to C-terminus: Cyclotide mden-M (31 aa).

The cyclopeptide (Gly-Asn) cross-link spans 1–31; it reads GTIPCGESCVYIPCITSALGCSCKKKVCYKN. Cystine bridges form between Cys-5–Cys-21, Cys-9–Cys-23, and Cys-14–Cys-28.

Belongs to the cyclotide family. Bracelet subfamily. In terms of processing, this is a cyclic peptide.

In terms of biological role, probably participates in a plant defense mechanism. This Melicytus dentatus (Tree violet) protein is Cyclotide mden-M.